Reading from the N-terminus, the 235-residue chain is Small ribosomal subunit protein uS3 (235 aa).

The region spanning Val-39–Arg-107 is the KH type-2 domain.

Belongs to the universal ribosomal protein uS3 family. In terms of assembly, part of the 30S ribosomal subunit. Forms a tight complex with proteins S10 and S14.

Binds the lower part of the 30S subunit head. Binds mRNA in the 70S ribosome, positioning it for translation. This is Small ribosomal subunit protein uS3 from Blochmanniella floridana.